The following is a 296-amino-acid chain: Transposase for insertion sequence element IST2 (296 aa).

It belongs to the transposase mutator family.

In terms of biological role, required for the transposition of the insertion element. This is Transposase for insertion sequence element IST2 from Acidithiobacillus ferrooxidans (Thiobacillus ferrooxidans).